A 357-amino-acid polypeptide reads, in one-letter code: 3-dehydroquinate synthase (357 aa).

NAD(+) is bound by residues 104-108 (GVVGD), 128-129 (TT), Lys-141, and 168-171 (FLET). Zn(2+) is bound by residues Glu-183, His-243, and His-260.

The protein belongs to the sugar phosphate cyclases superfamily. Dehydroquinate synthase family. The cofactor is NAD(+). It depends on Co(2+) as a cofactor. Zn(2+) serves as cofactor.

The protein localises to the cytoplasm. It catalyses the reaction 7-phospho-2-dehydro-3-deoxy-D-arabino-heptonate = 3-dehydroquinate + phosphate. It participates in metabolic intermediate biosynthesis; chorismate biosynthesis; chorismate from D-erythrose 4-phosphate and phosphoenolpyruvate: step 2/7. Catalyzes the conversion of 3-deoxy-D-arabino-heptulosonate 7-phosphate (DAHP) to dehydroquinate (DHQ). The chain is 3-dehydroquinate synthase from Streptococcus pyogenes serotype M3 (strain ATCC BAA-595 / MGAS315).